Here is a 293-residue protein sequence, read N- to C-terminus: Acetylglutamate kinase (293 aa).

Substrate is bound by residues 68–69 (GG), R90, and N189.

It belongs to the acetylglutamate kinase family. ArgB subfamily.

It is found in the cytoplasm. It carries out the reaction N-acetyl-L-glutamate + ATP = N-acetyl-L-glutamyl 5-phosphate + ADP. The protein operates within amino-acid biosynthesis; L-arginine biosynthesis; N(2)-acetyl-L-ornithine from L-glutamate: step 2/4. In terms of biological role, catalyzes the ATP-dependent phosphorylation of N-acetyl-L-glutamate. In Caldicellulosiruptor bescii (strain ATCC BAA-1888 / DSM 6725 / KCTC 15123 / Z-1320) (Anaerocellum thermophilum), this protein is Acetylglutamate kinase.